The sequence spans 191 residues: Dirigent protein 3 (191 aa).

The signal sequence occupies residues 1-21; that stretch reads MSKLILILTAQILLLTATALA. N-linked (GlcNAc...) asparagine glycans are attached at residues Asn-96 and Asn-131.

The protein belongs to the plant dirigent protein family. In terms of assembly, homodimer.

The protein resides in the secreted. Its subcellular location is the extracellular space. The protein localises to the apoplast. Its function is as follows. Dirigent proteins impart stereoselectivity on the phenoxy radical-coupling reaction, yielding optically active lignans from two molecules of coniferyl alcohol in the biosynthesis of lignans, flavonolignans, and alkaloids and thus plays a central role in plant secondary metabolism. This chain is Dirigent protein 3 (DIR3), found in Arabidopsis thaliana (Mouse-ear cress).